A 417-amino-acid polypeptide reads, in one-letter code: Proteasome-activating nucleotidase (417 aa).

Residues 24-78 (SKYLLDRVKQLEERNVRLKEEYRKIELEKKSVENKKVQYEREIRKLTSELDRLKT) adopt a coiled-coil conformation. Residues 203-208 (GTGKTL) and His-342 each bind ATP. A docks into pockets in the proteasome alpha-ring to cause gate opening region spans residues 415-417 (MFA).

This sequence belongs to the AAA ATPase family. Homohexamer. The hexameric complex has a two-ring architecture resembling a top hat that caps the 20S proteasome core at one or both ends. Upon ATP-binding, the C-terminus of PAN interacts with the alpha-rings of the proteasome core by binding to the intersubunit pockets.

It localises to the cytoplasm. Functionally, ATPase which is responsible for recognizing, binding, unfolding and translocation of substrate proteins into the archaeal 20S proteasome core particle. Is essential for opening the gate of the 20S proteasome via an interaction with its C-terminus, thereby allowing substrate entry and access to the site of proteolysis. Thus, the C-termini of the proteasomal ATPase function like a 'key in a lock' to induce gate opening and therefore regulate proteolysis. Unfolding activity requires energy from ATP hydrolysis, whereas ATP binding alone promotes ATPase-20S proteasome association which triggers gate opening, and supports translocation of unfolded substrates. The sequence is that of Proteasome-activating nucleotidase from Methanocella arvoryzae (strain DSM 22066 / NBRC 105507 / MRE50).